Reading from the N-terminus, the 144-residue chain is Large ribosomal subunit protein uL16 (144 aa).

It belongs to the universal ribosomal protein uL16 family. In terms of assembly, part of the 50S ribosomal subunit.

Its function is as follows. Binds 23S rRNA and is also seen to make contacts with the A and possibly P site tRNAs. This Lacticaseibacillus paracasei (strain ATCC 334 / BCRC 17002 / CCUG 31169 / CIP 107868 / KCTC 3260 / NRRL B-441) (Lactobacillus paracasei) protein is Large ribosomal subunit protein uL16.